The sequence spans 774 residues: Two pore channel protein 2 (774 aa).

Residues 1–92 (MEEEPLLAGS…GSLRLYRWYY (92 aa)) are Cytoplasmic-facing. The helical transmembrane segment at 93-113 (SNLCQWGLGLTIAVVLALAFI) threads the bilayer. Residues 114-140 (ERPSSLTYTSDIRVKPKPWEPPCGMTE) are Extracellular-facing. Residues 141 to 161 (GIEIVCLCIFILDVTAKGYLI) traverse the membrane as a helical segment. Residues 162-170 (GWEEFRMNK) lie on the Cytoplasmic side of the membrane. The helical transmembrane segment at 171-191 (WLLAYLIVITASVIDWMLSIS) threads the bilayer. Residues 192 to 197 (MLCDEN) lie on the Extracellular side of the membrane. Residues 198–218 (LRVRRLIRPFFLLQNSSLMKK) form a helical membrane-spanning segment. The interaction with phosphatidylinositol 3,5-bisphosphate stretch occupies residues 217–221 (KKTLK). The Cytoplasmic portion of the chain corresponds to 219–232 (TLKCIKRTLPEIAS). A helical membrane pass occupies residues 233–253 (VILLLALHICLFTMIGMLIFA). At 254-267 (KSDDPKQNGEWQTY) the chain is on the extracellular side. The helical; Pore-forming intramembrane region spans 268-292 (FRNLPKALSSLLVLLTTANNPDVMI). Residues 293–302 (PAYSLNRGYS) are Extracellular-facing. The helical transmembrane segment at 303–323 (IFFILFSVFGTYLLMNLMTAI) threads the bilayer. The Cytoplasmic portion of the chain corresponds to 324 to 452 (IYNQFRGYLL…YVYSHYYISV (129 aa)). A helical transmembrane segment spans residues 453–475 (LGNAVALANVICICTVLVLNAEK). The Extracellular portion of the chain corresponds to 476 to 486 (SASEKNYFYME). A helical membrane pass occupies residues 487-507 (IINCIFILYYLIEMLLKIVAF). The Cytoplasmic portion of the chain corresponds to 508 to 518 (GWKGYLSYRNN). The helical transmembrane segment at 519 to 539 (IFDGFLTVLLLAIQIVIFITF) threads the bilayer. Topologically, residues 540–564 (KIPYVDVDPVPRHVMALWEMIRLVN) are extracellular. A helical transmembrane segment spans residues 565-585 (MLIVFRFLRIIPEIKLMAVVA). The Cytoplasmic portion of the chain corresponds to 586 to 596 (STIVDLVKNLR). A helical transmembrane segment spans residues 597-617 (AFAGILLVVYYMFAVLGIWLF). At 618–658 (QGAISPPSNMSLVSNSSLENITGPYSMECGTFEQLEYWPNN) the chain is on the extracellular side. N-linked (GlcNAc...) asparagine glycosylation is found at Asn-626, Asn-632, and Asn-637. The segment at residues 659–681 (FDDFASSLILLYNIMVVNNWHVF) is an intramembrane region (helical; Pore-forming). Topologically, residues 682–696 (TDAYARYTTDWSLVY) are extracellular. Residues 697–717 (FVVWWLTSSVMWVNLFVALIL) traverse the membrane as a helical segment. Topologically, residues 718 to 774 (ENFTYKWDRSNGLSVEDVERIAYQSTVQLMFKEHVKEPTEEELLAQLHQHPHLHLSW) are cytoplasmic.

Belongs to the calcium channel alpha-1 subunit (TC 1.A.1.11) family. Two pore calcium channel subfamily. As to quaternary structure, homodimer. Post-translationally, N-glycosylated.

The protein localises to the late endosome membrane. The protein resides in the lysosome membrane. It catalyses the reaction Na(+)(in) = Na(+)(out). The catalysed reaction is Ca(2+)(in) = Ca(2+)(out). Intracellular channel initially characterized as a non-selective Ca(2+)-permeable channel activated by NAADP (nicotinic acid adenine dinucleotide phosphate), it is also a highly-selective Na(+) channel activated directly by PI(3,5)P2 (phosphatidylinositol 3,5-bisphosphate). Localizes to the lysosomal and late endosome membranes where it regulates organellar membrane excitability, membrane trafficking, and pH homeostasis. In Danio rerio (Zebrafish), this protein is Two pore channel protein 2 (tpcn2).